We begin with the raw amino-acid sequence, 89 residues long: Dynein light chain 2, cytoplasmic (89 aa).

It belongs to the dynein light chain family. Homodimer. The cytoplasmic dynein 1 complex consists of two catalytic heavy chains (HCs) and a number of non-catalytic subunits which present intermediate chains (ICs), light intermediate chains (LICs) and light chains (LCs); the composition seems to vary in respect to the IC, LIC and LC composition. The heavy chain homodimer serves as a scaffold for the probable homodimeric assembly of the respective non-catalytic subunits. Dynein ICs and LICs bind directly to the HC dimer and the LCs assemble on the IC dimer. Interacts with DYNC1I1. Interacts with BMF. Component of the myosin V motor complex. Interacts with BCAS1. Interacts with Basson/BSN. Interacts with AMBRA1 (via TQT motifs); tethering AMBRA1 to the cytoskeleton. Interacts with IQUB.

It is found in the cytoplasm. It localises to the cytoskeleton. In terms of biological role, acts as one of several non-catalytic accessory components of the cytoplasmic dynein 1 complex that are thought to be involved in linking dynein to cargos and to adapter proteins that regulate dynein function. Cytoplasmic dynein 1 acts as a motor for the intracellular retrograde motility of vesicles and organelles along microtubules. May play a role in changing or maintaining the spatial distribution of cytoskeletal structures. The protein is Dynein light chain 2, cytoplasmic (DYNLL2) of Homo sapiens (Human).